We begin with the raw amino-acid sequence, 122 residues long: Small ribosomal subunit protein bS6 (122 aa).

It belongs to the bacterial ribosomal protein bS6 family.

Binds together with bS18 to 16S ribosomal RNA. In Neisseria meningitidis serogroup C (strain 053442), this protein is Small ribosomal subunit protein bS6.